The following is a 533-amino-acid chain: uncharacterized protein (533 aa).

An N-terminal signal peptide occupies residues 1–21 (MVKVWKIGFGVFLPTALLFSA). The N-palmitoyl cysteine moiety is linked to residue Cys22. A lipid anchor (S-diacylglycerol cysteine) is attached at Cys22. A disordered region spans residues 91–111 (LSKNKEGQTASQTRSSSEQTT). A compositionally biased stretch (polar residues) spans 97–111 (GQTASQTRSSSEQTT).

It belongs to the MG067/MG068/MG395 family.

The protein resides in the cell membrane. This is an uncharacterized protein from Mycoplasma pneumoniae (strain ATCC 29342 / M129 / Subtype 1) (Mycoplasmoides pneumoniae).